Consider the following 478-residue polypeptide: Abscisate beta-glucosyltransferase (478 aa).

Catalysis depends on His-20, which acts as the Proton acceptor. His-20 lines the an anthocyanidin pocket. The active-site Charge relay is Asp-108. Positions 340, 342, 357, 360, 361, 362, and 365 each coordinate UDP-alpha-D-glucose. Ala-380 contacts an anthocyanidin. Residues Glu-381 and Gln-382 each coordinate UDP-alpha-D-glucose.

This sequence belongs to the UDP-glycosyltransferase family.

The enzyme catalyses 2-cis-(+)-abscisate + UDP-alpha-D-glucose = beta-D-glucopyranosyl cis-(+)-abscisate + UDP. In terms of biological role, glucosyltransferase involved in the catabolism of abscisic acid (ABA). Adds a glucosyl group at the C-1 position of ABA; (S)-2-trans-abscisate is a better substrate than the natural (+)-S-abscisate or its enantiomer (-)-R-abscisate. No activity with (-)-phaseic acid (PA), methylated-ABA or with other hormones such as jasmonate, zeatin, auxin (IAA) or gibberellin A3 (GA3). This chain is Abscisate beta-glucosyltransferase (AOG), found in Phaseolus angularis (Azuki bean).